The sequence spans 345 residues: GDSL esterase/lipase At1g23500 (345 aa).

An N-terminal signal peptide occupies residues 1–24 (MNFSLLSTMLMALSSVCLFFVGYA). The active-site Nucleophile is Ser42. A glycan (N-linked (GlcNAc...) asparagine) is linked at Asn103. Active-site residues include Asp320 and His323.

Belongs to the 'GDSL' lipolytic enzyme family.

Its subcellular location is the secreted. In Arabidopsis thaliana (Mouse-ear cress), this protein is GDSL esterase/lipase At1g23500.